We begin with the raw amino-acid sequence, 38 residues long: Phospholipase A2 1 (38 aa).

3 residues coordinate Ca(2+): Y28, G30, and G32.

Belongs to the phospholipase A2 family. Group I subfamily. The cofactor is Ca(2+). As to expression, expressed by the venom gland.

It localises to the secreted. It carries out the reaction a 1,2-diacyl-sn-glycero-3-phosphocholine + H2O = a 1-acyl-sn-glycero-3-phosphocholine + a fatty acid + H(+). Snake venom phospholipase A2 (PLA2) that inhibits neuromuscular transmission by blocking acetylcholine release from the nerve termini. PLA2 catalyzes the calcium-dependent hydrolysis of the 2-acyl groups in 3-sn-phosphoglycerides. This chain is Phospholipase A2 1, found in Calliophis bivirgatus (Blue Malaysian coral snake).